Reading from the N-terminus, the 986-residue chain is Ankyrin repeat, PH and SEC7 domain containing protein secG (986 aa).

Residues 1–28 (MGSTSNSTKNTGSTTTTTTTAAPATTAK) are compositionally biased toward low complexity. Residues 1–43 (MGSTSNSTKNTGSTTTTTTTAAPATTAKHSNSAPTRPSVHYYS) are disordered. Over residues 29-43 (HSNSAPTRPSVHYYS) the composition is skewed to polar residues. ANK repeat units lie at residues 34 to 63 (PTRP…TSPD), 68 to 97 (EKRT…NANI), 101 to 131 (AGNT…DVNT), 135 to 164 (KNGT…DPRA), 168 to 197 (NGET…KVNA), 201 to 230 (DCIT…KVDP), 234 to 263 (HGIS…NINC), 267 to 296 (EGVT…KINM), 300 to 329 (MGET…TMID), 334 to 363 (RQST…QINI), 367 to 396 (EGAT…PICI), 400 to 429 (QGAT…ELEV), 433 to 462 (QGGT…NVNA), 466 to 495 (HSST…RIDA), and 499 to 528 (AGKT…DLDQ). An SEC7 domain is found at 580 to 770 (QLAAEKQKLL…ENLYDKIVTN (191 aa)). Residues 784–895 (HVEKKGWLTK…WVQSIKSNIH (112 aa)) enclose the PH domain. Positions 911–986 (IRGRGKVSTK…PVQQQTSALS (76 aa)) are disordered. Polar residues predominate over residues 920–929 (KPIQNRKQTI). Low complexity-rich tracts occupy residues 936–953 (TTTT…SVGS) and 963–986 (SSGS…SALS).

This is Ankyrin repeat, PH and SEC7 domain containing protein secG (secG) from Dictyostelium discoideum (Social amoeba).